The primary structure comprises 155 residues: Cytochrome c-type biogenesis protein CcmE (155 aa).

Residues methionine 1–arginine 8 are Cytoplasmic-facing. A helical; Signal-anchor for type II membrane protein membrane pass occupies residues leucine 9–alanine 29. Residues leucine 30 to glutamine 155 are Periplasmic-facing. The heme site is built by histidine 124 and tyrosine 128.

Belongs to the CcmE/CycJ family.

It is found in the cell inner membrane. Functionally, heme chaperone required for the biogenesis of c-type cytochromes. Transiently binds heme delivered by CcmC and transfers the heme to apo-cytochromes in a process facilitated by CcmF and CcmH. The chain is Cytochrome c-type biogenesis protein CcmE from Azotobacter vinelandii (strain DJ / ATCC BAA-1303).